The sequence spans 159 residues: Histone H2A (159 aa).

Over residues 1 to 10 (MDSTGTGAGG) the composition is skewed to gly residues. Disordered stretches follow at residues 1–31 (MDSTGTGAGGKGKKGAAGRKVGGPRKKSVSR) and 133–159 (KTAEKASSGGSKEAKSPKKAAKSPKKA). 2 stretches are compositionally biased toward basic residues: residues 11–29 (KGKKGAAGRKVGGPRKKSV) and 149–159 (PKKAAKSPKKA). 2 short sequence motifs (SPKK motif) span residues 148-151 (SPKK) and 155-158 (SPKK).

It belongs to the histone H2A family. The nucleosome is a histone octamer containing two molecules each of H2A, H2B, H3 and H4 assembled in one H3-H4 heterotetramer and two H2A-H2B heterodimers. The octamer wraps approximately 147 bp of DNA.

The protein resides in the nucleus. The protein localises to the chromosome. In terms of biological role, core component of nucleosome. Nucleosomes wrap and compact DNA into chromatin, limiting DNA accessibility to the cellular machineries which require DNA as a template. Histones thereby play a central role in transcription regulation, DNA repair, DNA replication and chromosomal stability. DNA accessibility is regulated via a complex set of post-translational modifications of histones, also called histone code, and nucleosome remodeling. This Zea mays (Maize) protein is Histone H2A.